A 601-amino-acid polypeptide reads, in one-letter code: Glutamine--fructose-6-phosphate aminotransferase [isomerizing] (601 aa).

Cysteine 2 acts as the Nucleophile; for GATase activity in catalysis. Positions 2-214 constitute a Glutamine amidotransferase type-2 domain; it reads CGITGYIGTD…NGDIAHLTET (213 aa). 2 SIS domains span residues 281–420 and 453–591; these read STET…ARNA and IGRE…IDKP. The For Fru-6P isomerization activity role is filled by lysine 596.

As to quaternary structure, homodimer.

It is found in the cytoplasm. It carries out the reaction D-fructose 6-phosphate + L-glutamine = D-glucosamine 6-phosphate + L-glutamate. Catalyzes the first step in hexosamine metabolism, converting fructose-6P into glucosamine-6P using glutamine as a nitrogen source. The sequence is that of Glutamine--fructose-6-phosphate aminotransferase [isomerizing] from Halobacterium salinarum (strain ATCC 700922 / JCM 11081 / NRC-1) (Halobacterium halobium).